Reading from the N-terminus, the 191-residue chain is dCTP deaminase (191 aa).

Residues 112–117, 136–138, Gln157, Tyr173, and Gln183 each bind dCTP; these read KSTYAR and TLE. The active-site Proton donor/acceptor is the Glu138.

The protein belongs to the dCTP deaminase family. As to quaternary structure, homotrimer.

It carries out the reaction dCTP + H2O + H(+) = dUTP + NH4(+). Its pathway is pyrimidine metabolism; dUMP biosynthesis; dUMP from dCTP (dUTP route): step 1/2. Catalyzes the deamination of dCTP to dUTP. In Psychrobacter sp. (strain PRwf-1), this protein is dCTP deaminase.